The chain runs to 90 residues: Small ribosomal subunit protein uS17 (90 aa).

Belongs to the universal ribosomal protein uS17 family. Part of the 30S ribosomal subunit.

Functionally, one of the primary rRNA binding proteins, it binds specifically to the 5'-end of 16S ribosomal RNA. The sequence is that of Small ribosomal subunit protein uS17 from Burkholderia mallei (strain NCTC 10247).